The primary structure comprises 756 residues: 5-methyltetrahydropteroyltriglutamate--homocysteine methyltransferase (756 aa).

5-methyltetrahydropteroyltri-L-glutamate-binding positions include 16-19 and lysine 116; that span reads RELK. L-homocysteine contacts are provided by residues 435-437 and glutamate 488; that span reads IGS. Residues 435–437 and glutamate 488 each bind L-methionine; that span reads IGS. 5-methyltetrahydropteroyltri-L-glutamate contacts are provided by residues 519 to 520 and tryptophan 565; that span reads RC. Aspartate 603 contacts L-homocysteine. L-methionine is bound at residue aspartate 603. A 5-methyltetrahydropteroyltri-L-glutamate-binding site is contributed by glutamate 609. Residues histidine 645, cysteine 647, and glutamate 669 each coordinate Zn(2+). Histidine 698 serves as the catalytic Proton donor. Position 730 (cysteine 730) interacts with Zn(2+).

This sequence belongs to the vitamin-B12 independent methionine synthase family. Zn(2+) is required as a cofactor.

It carries out the reaction 5-methyltetrahydropteroyltri-L-glutamate + L-homocysteine = tetrahydropteroyltri-L-glutamate + L-methionine. The protein operates within amino-acid biosynthesis; L-methionine biosynthesis via de novo pathway; L-methionine from L-homocysteine (MetE route): step 1/1. Catalyzes the transfer of a methyl group from 5-methyltetrahydrofolate to homocysteine resulting in methionine formation. In Marinobacter nauticus (strain ATCC 700491 / DSM 11845 / VT8) (Marinobacter aquaeolei), this protein is 5-methyltetrahydropteroyltriglutamate--homocysteine methyltransferase.